Consider the following 1136-residue polypeptide: Probable RNA-dependent RNA polymerase 2 (1136 aa).

The tract at residues 965 to 989 (SGDSGALSSSSAQPSPTYDPDLEVP) is disordered. A compositionally biased stretch (low complexity) spans 967-980 (DSGALSSSSAQPSP).

It belongs to the RdRP family.

It catalyses the reaction RNA(n) + a ribonucleoside 5'-triphosphate = RNA(n+1) + diphosphate. Probably involved in the RNA silencing pathway and required for the generation of small interfering RNAs (siRNAs). This chain is Probable RNA-dependent RNA polymerase 2 (RDR2), found in Oryza sativa subsp. japonica (Rice).